Reading from the N-terminus, the 289-residue chain is Beta-lactamase Toho-2 (289 aa).

An N-terminal signal peptide occupies residues 1-28; it reads MVTKRVQRMMSAAAACIPLLLGSPTLYA. Serine 73 acts as the Acyl-ester intermediate in catalysis. Residue 235-237 coordinates substrate; the sequence is KTG.

Belongs to the class-A beta-lactamase family.

It carries out the reaction a beta-lactam + H2O = a substituted beta-amino acid. With respect to regulation, inhibited 16-fold better by the beta-lactamase inhibitor tazobactam than by clavulanic acid. Its function is as follows. Hydrolyzes beta-lactam antibiotics such as penicillin G, carbenicillin, cephaloridine, cefoxitin, cefotaxime, ceftazidime, and aztreonam. Has especially increased relative hydrolysis rates for cephalothin, cephaloridine, cefotaxime and ceftizoxime. This Escherichia coli protein is Beta-lactamase Toho-2 (bla).